The following is a 161-amino-acid chain: Lipoprotein signal peptidase (161 aa).

A run of 4 helical transmembrane segments spans residues 11–31 (PLFW…KLWV), 44–64 (LWSG…FSAF), 66–86 (GGAG…IIFA), and 100–120 (GCIL…GHVI). Active-site residues include Asp-121 and Asp-137. A helical membrane pass occupies residues 135 to 155 (LADVSINIGIAALLWASFFPV).

It belongs to the peptidase A8 family.

It is found in the cell inner membrane. It catalyses the reaction Release of signal peptides from bacterial membrane prolipoproteins. Hydrolyzes -Xaa-Yaa-Zaa-|-(S,diacylglyceryl)Cys-, in which Xaa is hydrophobic (preferably Leu), and Yaa (Ala or Ser) and Zaa (Gly or Ala) have small, neutral side chains.. The protein operates within protein modification; lipoprotein biosynthesis (signal peptide cleavage). Its function is as follows. This protein specifically catalyzes the removal of signal peptides from prolipoproteins. In Synechocystis sp. (strain ATCC 27184 / PCC 6803 / Kazusa), this protein is Lipoprotein signal peptidase.